Here is a 673-residue protein sequence, read N- to C-terminus: Auxin response factor 9 (673 aa).

The segment at residues 126–228 is a DNA-binding region (TF-B3); the sequence is FCKTLTASDT…ELRVGVRRLM (103 aa). Disordered stretches follow at residues 356–386 and 514–545; these read ELEP…PSVV and DSDQ…QSRQ. Over residues 516-545 the composition is skewed to polar residues; the sequence is DQISQPSNGNKSDAPGTSSERSPLESQSRQ. A PB1 domain is found at 547 to 639; that stretch reads RSCTKVIMQG…EEAKLLAPKS (93 aa).

It belongs to the ARF family. Homodimers and heterodimers. As to expression, expressed in roots, culms, leaves and young panicles.

It localises to the nucleus. Auxin response factors (ARFs) are transcriptional factors that bind specifically to the DNA sequence 5'-TGTCTC-3' found in the auxin-responsive promoter elements (AuxREs). The protein is Auxin response factor 9 (ARF9) of Oryza sativa subsp. japonica (Rice).